We begin with the raw amino-acid sequence, 1214 residues long: Inner capsid protein VP3 (1214 aa).

The segment at 1–80 (MPRRSARKAQ…SVNNDGDIIT (80 aa)) is disordered. The segment covering 8–18 (KAQSATASPAD) has biased composition (polar residues). Over residues 28–51 (PTTNSPPSTTSPNQAAADANQQQA) the composition is skewed to low complexity. The segment at 117–140 (YVCNVCNARFSTMSALSEHLRSDH) adopts a C2H2-type zinc-finger fold.

Belongs to the turreted BTV-fold inner capsid family. As to quaternary structure, homodecamer; each decamer is made up of two conformers of VP2, called VP2A and VP2B. 12 homodecamers assemble to form an icosahedral capsid. Interacts with VP6.

The protein localises to the virion. Its function is as follows. Inner capsid protein that self-assembles to form an icosahedral capsid with a T=2 symmetry, which consists of 120 copies of VP2, with channels at each of its five-fold vertices. This capsid constitutes the innermost concentric layer of the viral mature particle. The polypeptide is Inner capsid protein VP3 (S3) (Notemigonus crysoleucas (Golden shiner)).